The primary structure comprises 181 residues: ATP synthase subunit delta (181 aa).

It belongs to the ATPase delta chain family. In terms of assembly, F-type ATPases have 2 components, F(1) - the catalytic core - and F(0) - the membrane proton channel. F(1) has five subunits: alpha(3), beta(3), gamma(1), delta(1), epsilon(1). F(0) has three main subunits: a(1), b(2) and c(10-14). The alpha and beta chains form an alternating ring which encloses part of the gamma chain. F(1) is attached to F(0) by a central stalk formed by the gamma and epsilon chains, while a peripheral stalk is formed by the delta and b chains.

Its subcellular location is the cell inner membrane. Functionally, f(1)F(0) ATP synthase produces ATP from ADP in the presence of a proton or sodium gradient. F-type ATPases consist of two structural domains, F(1) containing the extramembraneous catalytic core and F(0) containing the membrane proton channel, linked together by a central stalk and a peripheral stalk. During catalysis, ATP synthesis in the catalytic domain of F(1) is coupled via a rotary mechanism of the central stalk subunits to proton translocation. Its function is as follows. This protein is part of the stalk that links CF(0) to CF(1). It either transmits conformational changes from CF(0) to CF(1) or is implicated in proton conduction. This Chlorobium phaeovibrioides (strain DSM 265 / 1930) (Prosthecochloris vibrioformis (strain DSM 265)) protein is ATP synthase subunit delta.